The sequence spans 236 residues: Aquaporin Z (236 aa).

2 helical membrane passes run 12-32 (FFGT…AAGV) and 37-57 (IGYA…AYAV). Residues 66-68 (NPA) carry the NPA 1 motif. A run of 3 helical transmembrane segments spans residues 92–112 (VVGA…VAGF), 136–156 (AALI…LGAT), and 163–183 (GFAP…SIPV). An NPA 2 motif is present at residues 189 to 191 (NPA). Residues 197–217 (ALFVGGWALEQLWLFWLAPIA) traverse the membrane as a helical segment.

Belongs to the MIP/aquaporin (TC 1.A.8) family. Homotetramer.

The protein resides in the cell inner membrane. It carries out the reaction H2O(in) = H2O(out). Channel that permits osmotically driven movement of water in both directions. It is involved in the osmoregulation and in the maintenance of cell turgor during volume expansion in rapidly growing cells. It mediates rapid entry or exit of water in response to abrupt changes in osmolarity. The protein is Aquaporin Z of Bordetella bronchiseptica (strain ATCC BAA-588 / NCTC 13252 / RB50) (Alcaligenes bronchisepticus).